The primary structure comprises 456 residues: Dolichyl-diphosphooligosaccharide--protein glycosyltransferase 48 kDa subunit (456 aa).

Residues 1–42 form the signal peptide; it reads MGYFRCARAGSFGRRRKMEPSTAARAWALFWLLLPLLGAVCA. At 43–427 the chain is on the lumenal side; it reads SGPRTLVLLD…YERFIPSAYP (385 aa). The helical transmembrane segment at 428–447 threads the bilayer; that stretch reads YYASAFSMMLGLFIFSIVFL. Residues 448–456 are Cytoplasmic-facing; it reads HMKEKEKSD.

Belongs to the DDOST 48 kDa subunit family. As to quaternary structure, component of the oligosaccharyltransferase (OST) complex. OST exists in two different complex forms which contain common core subunits RPN1, RPN2, OST48, OST4, DAD1 and TMEM258, either STT3A or STT3B as catalytic subunits, and form-specific accessory subunits. STT3A complex assembly occurs through the formation of 3 subcomplexes. Subcomplex 1 contains RPN1 and TMEM258, subcomplex 2 contains the STT3A-specific subunits STT3A, DC2/OSTC, and KCP2 as well as the core subunit OST4, and subcomplex 3 contains RPN2, DAD1, and OST48. The STT3A complex can form stable complexes with the Sec61 complex or with both the Sec61 and TRAP complexes. Interacts with SMIM22.

Its subcellular location is the endoplasmic reticulum membrane. The protein operates within protein modification; protein glycosylation. Its function is as follows. Subunit of the oligosaccharyl transferase (OST) complex that catalyzes the initial transfer of a defined glycan (Glc(3)Man(9)GlcNAc(2) in eukaryotes) from the lipid carrier dolichol-pyrophosphate to an asparagine residue within an Asn-X-Ser/Thr consensus motif in nascent polypeptide chains, the first step in protein N-glycosylation. N-glycosylation occurs cotranslationally and the complex associates with the Sec61 complex at the channel-forming translocon complex that mediates protein translocation across the endoplasmic reticulum (ER). All subunits are required for a maximal enzyme activity. Required for the assembly of both SST3A- and SS3B-containing OST complexes. This chain is Dolichyl-diphosphooligosaccharide--protein glycosyltransferase 48 kDa subunit, found in Homo sapiens (Human).